The chain runs to 238 residues: N-(5'-phosphoribosyl)anthranilate isomerase (238 aa).

The protein belongs to the TrpF family.

It catalyses the reaction N-(5-phospho-beta-D-ribosyl)anthranilate = 1-(2-carboxyphenylamino)-1-deoxy-D-ribulose 5-phosphate. It participates in amino-acid biosynthesis; L-tryptophan biosynthesis; L-tryptophan from chorismate: step 3/5. The sequence is that of N-(5'-phosphoribosyl)anthranilate isomerase from Methanosarcina acetivorans (strain ATCC 35395 / DSM 2834 / JCM 12185 / C2A).